The following is a 515-amino-acid chain: Methionine--tRNA ligase (515 aa).

The 'HIGH' region motif lies at 13 to 23 (AYPNGKPHIGH). The short motif at 300–304 (KMSKS) is the 'KMSKS' region element. ATP is bound at residue Lys303.

The protein belongs to the class-I aminoacyl-tRNA synthetase family. MetG type 2B subfamily. Monomer.

It is found in the cytoplasm. It carries out the reaction tRNA(Met) + L-methionine + ATP = L-methionyl-tRNA(Met) + AMP + diphosphate. In terms of biological role, is required not only for elongation of protein synthesis but also for the initiation of all mRNA translation through initiator tRNA(fMet) aminoacylation. The chain is Methionine--tRNA ligase from Brucella melitensis biotype 1 (strain ATCC 23456 / CCUG 17765 / NCTC 10094 / 16M).